The primary structure comprises 151 residues: MATLESRLAEMLKVPVEALGFQLWGIEYVQAGKHSILRVFIDGENGINIEDCANTSRQVSAVLDVEDPISTEYTLEVSSPGVDRPLFTAEQYAAYVGEDVKVQLTMPVAGSRNLKGAITKVEGQMLSLNVNGKELVVALDNIRKGNVIAKF.

Belongs to the RimP family.

It is found in the cytoplasm. Required for maturation of 30S ribosomal subunits. This is Ribosome maturation factor RimP from Shewanella putrefaciens (strain CN-32 / ATCC BAA-453).